The sequence spans 473 residues: Lactate utilization protein B (473 aa).

2 4Fe-4S ferredoxin-type domains span residues 302 to 332 (GSEF…GHSY) and 351 to 380 (YDDY…LHDL). Residues C311, C314, C317, C321, C364, C367, and C371 each coordinate [4Fe-4S] cluster.

This sequence belongs to the LutB/YkgF family.

Is involved in L-lactate degradation and allows cells to grow with lactate as the sole carbon source. Has probably a role as an electron transporter during oxidation of L-lactate. The polypeptide is Lactate utilization protein B (Bacillus cereus (strain G9842)).